The sequence spans 636 residues: Fructose-1,6-bisphosphatase class 3 (636 aa).

This sequence belongs to the FBPase class 3 family. Requires Mn(2+) as cofactor.

It carries out the reaction beta-D-fructose 1,6-bisphosphate + H2O = beta-D-fructose 6-phosphate + phosphate. Its pathway is carbohydrate biosynthesis; gluconeogenesis. In Streptococcus sanguinis (strain SK36), this protein is Fructose-1,6-bisphosphatase class 3.